Reading from the N-terminus, the 187-residue chain is Peptide methionine sulfoxide reductase A2-1 (187 aa).

The protein belongs to the MsrA Met sulfoxide reductase family.

The protein localises to the cytoplasm. Its subcellular location is the cytosol. The enzyme catalyses L-methionyl-[protein] + [thioredoxin]-disulfide + H2O = L-methionyl-(S)-S-oxide-[protein] + [thioredoxin]-dithiol. The catalysed reaction is [thioredoxin]-disulfide + L-methionine + H2O = L-methionine (S)-S-oxide + [thioredoxin]-dithiol. In terms of biological role, catalyzes the reduction of methionine sulfoxide (MetSO) to methionine in proteins. Plays a protective role against oxidative stress by restoring activity to proteins that have been inactivated by methionine oxidation. MSRA family specifically reduces the MetSO S-enantiomer. This Oryza sativa subsp. japonica (Rice) protein is Peptide methionine sulfoxide reductase A2-1 (MSRA2-1).